A 352-amino-acid polypeptide reads, in one-letter code: Heat-inducible transcription repressor HrcA (352 aa).

It belongs to the HrcA family.

Negative regulator of class I heat shock genes (grpE-dnaK-dnaJ and groELS operons). Prevents heat-shock induction of these operons. The sequence is that of Heat-inducible transcription repressor HrcA from Ralstonia nicotianae (strain ATCC BAA-1114 / GMI1000) (Ralstonia solanacearum).